Reading from the N-terminus, the 231-residue chain is Aminodeoxyfutalosine nucleosidase (231 aa).

The Proton acceptor role is filled by glutamate 14. Residues glycine 81, valine 155, and 175–176 (ME) contribute to the substrate site. The active-site Proton donor is aspartate 199.

The protein belongs to the PNP/UDP phosphorylase family. Homodimer.

It catalyses the reaction 6-amino-6-deoxyfutalosine + H2O = dehypoxanthine futalosine + adenine. The catalysed reaction is S-adenosyl-L-homocysteine + H2O = S-(5-deoxy-D-ribos-5-yl)-L-homocysteine + adenine. The enzyme catalyses S-methyl-5'-thioadenosine + H2O = 5-(methylsulfanyl)-D-ribose + adenine. It carries out the reaction 5'-deoxyadenosine + H2O = 5-deoxy-D-ribose + adenine. Its pathway is quinol/quinone metabolism; menaquinone biosynthesis. The protein operates within amino-acid biosynthesis; L-methionine biosynthesis via salvage pathway; S-methyl-5-thio-alpha-D-ribose 1-phosphate from S-methyl-5'-thioadenosine (hydrolase route): step 1/2. In terms of biological role, catalyzes the direct conversion of aminodeoxyfutalosine (AFL) into dehypoxanthine futalosine (DHFL) and adenine via the hydrolysis of the N-glycosidic bond; this reaction seems to represent an essential step in the menaquinone biosynthesis pathway in Helicobacter species. Can also probably catalyzes the hydrolysis of 5'-methylthioadenosine (MTA) and S-adenosylhomocysteine (SAH) to adenine and the corresponding thioribose, 5'-methylthioribose and S-ribosylhomocysteine, respectively. These other activities highlight the tremendous versatility of the enzyme, which also plays key roles in S-adenosylmethionine recycling and in the biosynthesis of the quorum-sensing molecule autoinducer-2. Does not act on futalosine (FL) as substrate. The sequence is that of Aminodeoxyfutalosine nucleosidase (mtnN) from Helicobacter pylori (strain ATCC 700392 / 26695) (Campylobacter pylori).